A 420-amino-acid chain; its full sequence is Exodeoxyribonuclease 7 large subunit (420 aa).

Belongs to the XseA family. Heterooligomer composed of large and small subunits.

The protein localises to the cytoplasm. The catalysed reaction is Exonucleolytic cleavage in either 5'- to 3'- or 3'- to 5'-direction to yield nucleoside 5'-phosphates.. Its function is as follows. Bidirectionally degrades single-stranded DNA into large acid-insoluble oligonucleotides, which are then degraded further into small acid-soluble oligonucleotides. The protein is Exodeoxyribonuclease 7 large subunit of Helicobacter pylori (strain ATCC 700392 / 26695) (Campylobacter pylori).